The primary structure comprises 716 residues: 1,4-alpha-glucan branching enzyme GlgB (716 aa).

The Nucleophile role is filled by Asp-398. The active-site Proton donor is Glu-451.

Belongs to the glycosyl hydrolase 13 family. GlgB subfamily. As to quaternary structure, monomer.

The catalysed reaction is Transfers a segment of a (1-&gt;4)-alpha-D-glucan chain to a primary hydroxy group in a similar glucan chain.. It functions in the pathway glycan biosynthesis; glycogen biosynthesis. Catalyzes the formation of the alpha-1,6-glucosidic linkages in glycogen by scission of a 1,4-alpha-linked oligosaccharide from growing alpha-1,4-glucan chains and the subsequent attachment of the oligosaccharide to the alpha-1,6 position. This chain is 1,4-alpha-glucan branching enzyme GlgB, found in Nitrobacter winogradskyi (strain ATCC 25391 / DSM 10237 / CIP 104748 / NCIMB 11846 / Nb-255).